The following is a 726-amino-acid chain: Catalase-peroxidase (726 aa).

Positions 91-214 (WHAAGTYRIG…LAAVQMGLIY (124 aa)) form a cross-link, tryptophyl-tyrosyl-methioninium (Trp-Tyr) (with M-240). The Proton acceptor role is filled by histidine 92. Positions 214 to 240 (YVNPEGPNGNPDPVAAAIDIRETFRRM) form a cross-link, tryptophyl-tyrosyl-methioninium (Tyr-Met) (with W-91). Histidine 255 contributes to the heme b binding site. Residues 335–362 (AHQWKPKGNAGAGTVPDPADPSKRRSPS) are disordered.

Belongs to the peroxidase family. Peroxidase/catalase subfamily. Homodimer or homotetramer. Heme b is required as a cofactor. Post-translationally, formation of the three residue Trp-Tyr-Met cross-link is important for the catalase, but not the peroxidase activity of the enzyme.

It carries out the reaction H2O2 + AH2 = A + 2 H2O. The catalysed reaction is 2 H2O2 = O2 + 2 H2O. In terms of biological role, bifunctional enzyme with both catalase and broad-spectrum peroxidase activity. The sequence is that of Catalase-peroxidase from Cupriavidus metallidurans (strain ATCC 43123 / DSM 2839 / NBRC 102507 / CH34) (Ralstonia metallidurans).